The chain runs to 238 residues: 7-cyano-7-deazaguanine synthase (238 aa).

An ATP-binding site is contributed by 10–20 (LSGGLDSSTVL). The Zn(2+) site is built by cysteine 190, cysteine 198, cysteine 201, and cysteine 204.

Belongs to the QueC family. Zn(2+) serves as cofactor.

The catalysed reaction is 7-carboxy-7-deazaguanine + NH4(+) + ATP = 7-cyano-7-deazaguanine + ADP + phosphate + H2O + H(+). The protein operates within purine metabolism; 7-cyano-7-deazaguanine biosynthesis. Its function is as follows. Catalyzes the ATP-dependent conversion of 7-carboxy-7-deazaguanine (CDG) to 7-cyano-7-deazaguanine (preQ(0)). In Thermoplasma acidophilum (strain ATCC 25905 / DSM 1728 / JCM 9062 / NBRC 15155 / AMRC-C165), this protein is 7-cyano-7-deazaguanine synthase.